We begin with the raw amino-acid sequence, 426 residues long: Phosphomethylpyrimidine synthase (426 aa).

Substrate is bound by residues Asn65, Met94, Tyr123, His162, 184-186 (SRG), 225-228 (DGMR), and Glu264. His268 serves as a coordination point for Zn(2+). Substrate is bound at residue Tyr291. His332 is a Zn(2+) binding site. Residues Cys408, Cys411, and Cys415 each contribute to the [4Fe-4S] cluster site.

Belongs to the ThiC family. Requires [4Fe-4S] cluster as cofactor.

It carries out the reaction 5-amino-1-(5-phospho-beta-D-ribosyl)imidazole + S-adenosyl-L-methionine = 4-amino-2-methyl-5-(phosphooxymethyl)pyrimidine + CO + 5'-deoxyadenosine + formate + L-methionine + 3 H(+). Its pathway is cofactor biosynthesis; thiamine diphosphate biosynthesis. Catalyzes the synthesis of the hydroxymethylpyrimidine phosphate (HMP-P) moiety of thiamine from aminoimidazole ribotide (AIR) in a radical S-adenosyl-L-methionine (SAM)-dependent reaction. The polypeptide is Phosphomethylpyrimidine synthase (Methanococcus maripaludis (strain C6 / ATCC BAA-1332)).